Consider the following 465-residue polypeptide: Probable inactive receptor-like kinase BSK12 (465 aa).

A compositionally biased stretch (polar residues) spans 1-12 (MGCCYSLSSTVD). Residues 1 to 34 (MGCCYSLSSTVDPVQDHTTDASSEPRNGGGEDPP) are disordered. G2 carries N-myristoyl glycine lipidation. Residues C3 and C4 are each lipidated (S-palmitoyl cysteine). Residues 50–291 (FSPENIVSDQ…KEIVATLETL (242 aa)) form the Protein kinase domain. ATP contacts are provided by residues 56-64 (VSDQTSDVV) and K78.

Belongs to the protein kinase superfamily. Ser/Thr protein kinase family. As to quaternary structure, interacts with YDA. Post-translationally, diacylation-mediated membrane association is essential for BSK12 function. Expressed at the mRNA level in the sperm cells in mature pollen, but the protein is only detectable in the zygote and the micropylar endosperm upon fertilization.

It is found in the cell membrane. Functionally, probable inactive protein kinase that activates the YODA MAP kinase cascade, which regulates the asymmetric first division and embryo polarity, by promoting the elongation of the zygote and the development of its basal daughter cell into the extra-embryonic suspensor. Acts as an adapter at the plasma membrane, possibly by recruiting and binding an activator. This chain is Probable inactive receptor-like kinase BSK12, found in Arabidopsis thaliana (Mouse-ear cress).